Consider the following 207-residue polypeptide: Ubiquitin-conjugating enzyme E2 E3 (207 aa).

Over residues 1 to 10 (MSSDRQRSDD) the composition is skewed to basic and acidic residues. Residues 1–63 (MSSDRQRSDD…KTTAKLSTSA (63 aa)) form a disordered region. Ser2 bears the N-acetylserine mark. At Ser8 the chain carries Phosphoserine. Residues 50–63 (KLSSKTTAKLSTSA) show a composition bias toward low complexity. Positions 61–207 (TSAKRIQKEL…ARQWTKRYAT (147 aa)) constitute a UBC core domain. Catalysis depends on Cys145, which acts as the Glycyl thioester intermediate.

Belongs to the ubiquitin-conjugating enzyme family. As to quaternary structure, the ubiquitin-loaded form interacts specifically with importin-11 (IPO11), leading to its import into the nucleus. Interacts with NEDD4L.

It localises to the nucleus. The protein localises to the cytoplasm. It carries out the reaction S-ubiquitinyl-[E1 ubiquitin-activating enzyme]-L-cysteine + [E2 ubiquitin-conjugating enzyme]-L-cysteine = [E1 ubiquitin-activating enzyme]-L-cysteine + S-ubiquitinyl-[E2 ubiquitin-conjugating enzyme]-L-cysteine.. It participates in protein modification; protein ubiquitination. Functionally, accepts ubiquitin from the E1 complex and catalyzes its covalent attachment to other proteins. In vitro catalyzes 'Lys-11'- and 'Lys-48'-, as well as 'Lys-63'-linked polyubiquitination. Participates in the regulation of transepithelial sodium transport in renal cells. The sequence is that of Ubiquitin-conjugating enzyme E2 E3 (UBE2E3) from Bos taurus (Bovine).